A 182-amino-acid chain; its full sequence is CDP-diacylglycerol--glycerol-3-phosphate 3-phosphatidyltransferase (182 aa).

Over 2–12 the chain is Cytoplasmic; the sequence is QFNIPTLLTLF. A helical transmembrane segment spans residues 13–37; sequence RVALIPFFVLAFYLPFVWAPLLCAL. Topologically, residues 38-60 are periplasmic; sequence IFVFAAVTDWFDGFLARRWKQTT. A helical transmembrane segment spans residues 61 to 81; it reads RFGAFLDPVADKVMVAVALVL. Residues 82–86 lie on the Cytoplasmic side of the membrane; the sequence is VAEYY. The helical transmembrane segment at 87 to 107 threads the bilayer; sequence HSWWITLPAATMIAREIIISA. The Periplasmic portion of the chain corresponds to 108-145; the sequence is LREWMAEIGKRSSVAVSWIGKVKTTAQMMALFALLWRP. The chain crosses the membrane as a helical span at residues 146-168; sequence ERIVEGIGVAALYIAAVLTFWSM. At 169–181 the chain is on the cytoplasmic side; that stretch reads FQYLNAARHDLLE.

It belongs to the CDP-alcohol phosphatidyltransferase class-I family.

It localises to the cell inner membrane. It catalyses the reaction a CDP-1,2-diacyl-sn-glycerol + sn-glycerol 3-phosphate = a 1,2-diacyl-sn-glycero-3-phospho-(1'-sn-glycero-3'-phosphate) + CMP + H(+). Its pathway is phospholipid metabolism; phosphatidylglycerol biosynthesis; phosphatidylglycerol from CDP-diacylglycerol: step 1/2. Functionally, catalyzes the conversion of cytidine diphosphate diacylglycerol (CDP-DG) and glycerol 3-phosphate into phosphatidylglycerol. Essential for the synthesis of anionic phospholipids, thereby playing a role in balancing the ratio of zwitterionic and anionic phospholipids, which is thought to be important for normal membrane function. The protein is CDP-diacylglycerol--glycerol-3-phosphate 3-phosphatidyltransferase of Pectobacterium atrosepticum (strain SCRI 1043 / ATCC BAA-672) (Erwinia carotovora subsp. atroseptica).